The sequence spans 162 residues: Nucleotide-binding protein Mpe_A3039 (162 aa).

Belongs to the YajQ family.

In terms of biological role, nucleotide-binding protein. In Methylibium petroleiphilum (strain ATCC BAA-1232 / LMG 22953 / PM1), this protein is Nucleotide-binding protein Mpe_A3039.